The primary structure comprises 341 residues: HTH-type transcriptional repressor PurR (341 aa).

The HTH lacI-type domain occupies 2 to 56; it reads ATIKDVAKRANVSTTTVSHVINKTRFVAEETRNAVWAAIKELHYSPSAVARSLKV. Positions 4-23 form a DNA-binding region, H-T-H motif; it reads IKDVAKRANVSTTTVSHVIN. Residues 48–56 mediate DNA binding; sequence SAVARSLKV. Residues Tyr-73, Arg-190, Thr-192, Phe-221, and Asp-275 each coordinate hypoxanthine.

Homodimer.

It participates in purine metabolism; purine nucleotide biosynthesis [regulation]. Functionally, is the main repressor of the genes involved in the de novo synthesis of purine nucleotides, regulating purB, purC, purEK, purF, purHD, purL, purMN and guaBA expression. PurR is allosterically activated to bind its cognate DNA by binding the purine corepressors, hypoxanthine or guanine, thereby effecting transcription repression. The polypeptide is HTH-type transcriptional repressor PurR (Shigella sonnei (strain Ss046)).